The sequence spans 289 residues: D-alanine aminotransferase (289 aa).

Residue Tyr31 participates in substrate binding. Residue Arg50 coordinates pyridoxal 5'-phosphate. The substrate site is built by Arg99 and His101. Lys147 carries the N6-(pyridoxal phosphate)lysine modification. Glu179 is a binding site for pyridoxal 5'-phosphate.

Belongs to the class-IV pyridoxal-phosphate-dependent aminotransferase family. In terms of assembly, homodimer. It depends on pyridoxal 5'-phosphate as a cofactor.

It catalyses the reaction D-alanine + 2-oxoglutarate = D-glutamate + pyruvate. Functionally, acts on the D-isomers of alanine, leucine, aspartate, glutamate, aminobutyrate, norvaline and asparagine. The enzyme transfers an amino group from a substrate D-amino acid to the pyridoxal phosphate cofactor to form pyridoxamine and an alpha-keto acid in the first half-reaction. The second half-reaction is the reverse of the first, transferring the amino group from the pyridoxamine to a second alpha-keto acid to form the product D-amino acid via a ping-pong mechanism. This is an important process in the formation of D-alanine and D-glutamate, which are essential bacterial cell wall components. The chain is D-alanine aminotransferase (dat) from Listeria monocytogenes serovar 1/2a (strain ATCC BAA-679 / EGD-e).